Reading from the N-terminus, the 343-residue chain is Heat-inducible transcription repressor HrcA (343 aa).

It belongs to the HrcA family.

In terms of biological role, negative regulator of class I heat shock genes (grpE-dnaK-dnaJ and groELS operons). Prevents heat-shock induction of these operons. The polypeptide is Heat-inducible transcription repressor HrcA (Mycolicibacterium gilvum (strain PYR-GCK) (Mycobacterium gilvum (strain PYR-GCK))).